The chain runs to 570 residues: Urease subunit alpha (570 aa).

One can recognise a Urease domain in the interval 131–570 (GGMDSHIHFI…LPMAQRYFLF (440 aa)). Ni(2+)-binding residues include H136, H138, and K219. K219 bears the N6-carboxylysine mark. A substrate-binding site is contributed by H221. H248 and H274 together coordinate Ni(2+). The active-site Proton donor is H322. D362 lines the Ni(2+) pocket.

It belongs to the metallo-dependent hydrolases superfamily. Urease alpha subunit family. Heterotrimer of UreA (gamma), UreB (beta) and UreC (alpha) subunits. Three heterotrimers associate to form the active enzyme. It depends on Ni cation as a cofactor. Post-translationally, carboxylation allows a single lysine to coordinate two nickel ions.

The protein localises to the cytoplasm. It carries out the reaction urea + 2 H2O + H(+) = hydrogencarbonate + 2 NH4(+). It functions in the pathway nitrogen metabolism; urea degradation; CO(2) and NH(3) from urea (urease route): step 1/1. The protein is Urease subunit alpha of Rhizobium meliloti (strain 1021) (Ensifer meliloti).